The chain runs to 232 residues: Lipoprotein-releasing system ATP-binding protein LolD (232 aa).

In terms of domain architecture, ABC transporter spans 11–231 (VYLHDIKRQY…SIEDGVIVEL (221 aa)). 47–54 (APSGSGKS) contributes to the ATP binding site.

It belongs to the ABC transporter superfamily. Lipoprotein translocase (TC 3.A.1.125) family. As to quaternary structure, the complex is composed of two ATP-binding proteins (LolD) and two transmembrane proteins (LolC and LolE).

It is found in the cell inner membrane. Part of the ABC transporter complex LolCDE involved in the translocation of mature outer membrane-directed lipoproteins, from the inner membrane to the periplasmic chaperone, LolA. Responsible for the formation of the LolA-lipoprotein complex in an ATP-dependent manner. The protein is Lipoprotein-releasing system ATP-binding protein LolD of Rhodopseudomonas palustris (strain BisB5).